We begin with the raw amino-acid sequence, 80 residues long: Exodeoxyribonuclease 7 small subunit (80 aa).

It belongs to the XseB family. In terms of assembly, heterooligomer composed of large and small subunits.

The protein localises to the cytoplasm. It catalyses the reaction Exonucleolytic cleavage in either 5'- to 3'- or 3'- to 5'-direction to yield nucleoside 5'-phosphates.. Bidirectionally degrades single-stranded DNA into large acid-insoluble oligonucleotides, which are then degraded further into small acid-soluble oligonucleotides. The chain is Exodeoxyribonuclease 7 small subunit from Rickettsia conorii (strain ATCC VR-613 / Malish 7).